The primary structure comprises 251 residues: Myozenin-3 (251 aa).

Ser31 is subject to Phosphoserine. Positions 50-67 (LLFQKRQRRVQKFTFELA) are binding to ACTN2, PPP3CA and TCAP. Positions 67 to 110 (AASQRAMLAGSARRKVTGTAESGTVANANGPEGPNYRSELHIFP) are binding to FLNC. The interval 79 to 102 (RRKVTGTAESGTVANANGPEGPNY) is disordered. The segment at 186 to 207 (PSPNDYRNFNKTPVPFGGPLVG) is binding to ACTN2.

This sequence belongs to the myozenin family. In terms of assembly, interacts with ACTN2, LDB3, FLNC, PPP3CA and TCAP. Expressed specifically in skeletal muscle. Not detected in heart.

It localises to the cytoplasm. It is found in the myofibril. Its subcellular location is the sarcomere. The protein resides in the z line. Myozenins may serve as intracellular binding proteins involved in linking Z line proteins such as alpha-actinin, gamma-filamin, TCAP/telethonin, LDB3/ZASP and localizing calcineurin signaling to the sarcomere. Plays an important role in the modulation of calcineurin signaling. May play a role in myofibrillogenesis. This is Myozenin-3 from Homo sapiens (Human).